Consider the following 1004-residue polypeptide: 2-oxoglutarate dehydrogenase E1 component (1004 aa).

The protein belongs to the alpha-ketoglutarate dehydrogenase family. As to quaternary structure, homodimer. Part of the 2-oxoglutarate dehydrogenase (OGDH) complex composed of E1 (2-oxoglutarate dehydrogenase), E2 (dihydrolipoamide succinyltransferase) and E3 (dihydrolipoamide dehydrogenase); the complex contains multiple copies of the three enzymatic components (E1, E2 and E3). Thiamine diphosphate is required as a cofactor.

The enzyme catalyses N(6)-[(R)-lipoyl]-L-lysyl-[protein] + 2-oxoglutarate + H(+) = N(6)-[(R)-S(8)-succinyldihydrolipoyl]-L-lysyl-[protein] + CO2. E1 component of the 2-oxoglutarate dehydrogenase (OGDH) complex which catalyzes the decarboxylation of 2-oxoglutarate, the first step in the conversion of 2-oxoglutarate to succinyl-CoA and CO(2). This Brucella suis (strain ATCC 23445 / NCTC 10510) protein is 2-oxoglutarate dehydrogenase E1 component.